A 744-amino-acid polypeptide reads, in one-letter code: Deleted in azoospermia protein 1 (744 aa).

Over residues 1–10 the composition is skewed to polar residues; sequence MSAANPETPN. The disordered stretch occupies residues 1 to 27; the sequence is MSAANPETPNSTISREASTQSSSAAAS. Residues 11 to 27 show a composition bias toward low complexity; it reads STISREASTQSSSAAAS. Residues 40-115 form the RRM 1 domain; sequence NTVFVGGIDA…KKLKLGPAIR (76 aa). Residues 163-175 show a composition bias toward polar residues; sequence QHVQSAANPETPN. The disordered stretch occupies residues 163-192; that stretch reads QHVQSAANPETPNSTISREASTQSSSAAAS. A compositionally biased stretch (low complexity) spans 176 to 192; it reads STISREASTQSSSAAAS. An RRM 2 domain is found at 205-280; sequence NTVFVGGIDA…KKLKLGPAIR (76 aa). The segment covering 328 to 340 has biased composition (polar residues); sequence QHVQSAANPETPN. Residues 328–357 form a disordered region; the sequence is QHVQSAANPETPNSTISREASTQSSSAAAS. Residues 341–357 show a composition bias toward low complexity; that stretch reads STISREASTQSSSAAAS. The region spanning 370-445 is the RRM 3 domain; it reads NTVFVGGIDA…KKLKLGPAIR (76 aa). 9 consecutive DAZ domains span residues 497 to 520, 521 to 544, 545 to 568, 569 to 592, 593 to 616, 617 to 640, 641 to 664, 665 to 688, and 689 to 712; these read AYSA…YNYQ, EYPT…YNYQ, PFPA…YNYQ, and AFPA…YNYQ.

The protein belongs to the RRM DAZ family. In terms of assembly, forms a heterodimer with BOLL and DAZL. Interacts with PUM2, DAZAP1, DAZAP2, DZIP1 and DZIP3. In terms of tissue distribution, testis-specific. Expression restricted to premeiotic germ cells, particularly in spermatogonia (at protein level).

It is found in the cytoplasm. The protein localises to the nucleus. In terms of biological role, RNA-binding protein that plays an essential role in spermatogenesis. May act by binding to the 3'-UTR of mRNAs and regulating their translation. Promotes germ-cell progression to meiosis and formation of haploid germ cells. This is Deleted in azoospermia protein 1 (DAZ1) from Homo sapiens (Human).